A 310-amino-acid polypeptide reads, in one-letter code: CCR4-NOT transcription complex subunit 7 (310 aa).

Aspartate 51, glutamate 53, aspartate 172, and aspartate 245 together coordinate a divalent metal cation.

This sequence belongs to the CAF1 family. In terms of assembly, component of the CCR4-NOT complex at least composed of ccf-1, ccr-4 and let-711, which is required for germ cell development in hermaphrodites. Within the complex interacts with let-711. As to expression, highly expressed in the germline. In particular, highly expressed in germ cells that enter meiosis and progress through the pachytene stage.

Its subcellular location is the nucleus. The protein resides in the cytoplasm. It catalyses the reaction Exonucleolytic cleavage of poly(A) to 5'-AMP.. Catalytic component of the CCR4-NOT complex which is one of the major cellular mRNA deadenylases and is linked to various cellular processes including bulk mRNA degradation, miRNA-mediated repression, translational repression during translational initiation and general transcription regulation. Within the complex, plays a role in miRNA-mediated deadenylation in embryos. Within the complex promotes germ cell development and fertility in hermaphrodites. Additional complex functions may be a consequence of its influence on mRNA expression. The protein is CCR4-NOT transcription complex subunit 7 of Caenorhabditis elegans.